Here is a 120-residue protein sequence, read N- to C-terminus: Flagellar protein FliT (120 aa).

Residues 1–50 (MTNFIPSLTDWHALHALSITMLDLAHSGKWDELIEQEMNYVQLVEGIARN) are required for homodimerization. The segment at 59–97 (LINQAKEILNAVLRNEAELKTLLQHRMEELRQLIDQTGK) is fliD binding.

The protein belongs to the FliT family. In terms of assembly, homodimer. Interacts with FliD and FlhC.

The protein localises to the cytoplasm. It localises to the cytosol. Its function is as follows. Dual-function protein that regulates the transcription of class 2 flagellar operons and that also acts as an export chaperone for the filament-capping protein FliD. As a transcriptional regulator, acts as an anti-FlhDC factor; it directly binds FlhC, thus inhibiting the binding of the FlhC/FlhD complex to class 2 promoters, resulting in decreased expression of class 2 flagellar operons. As a chaperone, effects FliD transition to the membrane by preventing its premature polymerization, and by directing it to the export apparatus. This Citrobacter koseri (strain ATCC BAA-895 / CDC 4225-83 / SGSC4696) protein is Flagellar protein FliT.